The sequence spans 473 residues: Ribulose bisphosphate carboxylase large chain (473 aa).

Substrate is bound by residues asparagine 116 and threonine 166. The active-site Proton acceptor is lysine 168. Lysine 170 lines the substrate pocket. The Mg(2+) site is built by lysine 194, aspartate 196, and glutamate 197. Lysine 194 is modified (N6-carboxylysine). The Proton acceptor role is filled by histidine 287. Arginine 288, histidine 320, and serine 372 together coordinate substrate.

The protein belongs to the RuBisCO large chain family. Type I subfamily. Heterohexadecamer of 8 large chains and 8 small chains. The cofactor is Mg(2+).

It catalyses the reaction 2 (2R)-3-phosphoglycerate + 2 H(+) = D-ribulose 1,5-bisphosphate + CO2 + H2O. The catalysed reaction is D-ribulose 1,5-bisphosphate + O2 = 2-phosphoglycolate + (2R)-3-phosphoglycerate + 2 H(+). In terms of biological role, ruBisCO catalyzes two reactions: the carboxylation of D-ribulose 1,5-bisphosphate, the primary event in carbon dioxide fixation, as well as the oxidative fragmentation of the pentose substrate. Both reactions occur simultaneously and in competition at the same active site. In Rhodobacter capsulatus (strain ATCC BAA-309 / NBRC 16581 / SB1003), this protein is Ribulose bisphosphate carboxylase large chain.